The primary structure comprises 390 residues: Zinc transporter 7 (390 aa).

Over 1–37 (MLPLSIKDDEYKPPKFNLVRKVSGWIRSIFSDTTSRN) the chain is Cytoplasmic. The chain crosses the membrane as a helical span at residues 38–58 (LFCFLCLNLSFAFVELFYGIW). The Lumenal segment spans residues 59-67 (SNSLGLISD). A helical membrane pass occupies residues 68 to 88 (SFHMFFDCTALLAGLAASVIS). The Cytoplasmic portion of the chain corresponds to 89–102 (RWKTNEAFSYGYVR). Residues 103–123 (AEVLAGFVNGLFLIFTAFFIF) traverse the membrane as a helical segment. Residues 124–140 (SEGIERALDTPEVHHER) lie on the Lumenal side of the membrane. A helical membrane pass occupies residues 141–161 (LLPVSILGFLVNLIGIFVFQH). Residues 161 to 226 (HGGGHGHSHE…SHDQSHKHGH (66 aa)) form a his-rich loop region. Residues 162–250 (GGGHGHSHES…TGSSKQILEG (89 aa)) are Cytoplasmic-facing. A disordered region spans residues 167 to 243 (HSHESGHGHS…DEPPEEHTGS (77 aa)). A compositionally biased stretch (low complexity) spans 177-186 (HSLFNGSLSH). A compositionally biased stretch (basic residues) spans 187–208 (GHSHSHGGSHGHSHGGGHGHSH). 2 stretches are compositionally biased toward basic and acidic residues: residues 209-222 (SHGE…DQSH) and 232-242 (CHDEPPEEHTG). The chain crosses the membrane as a helical span at residues 251 to 271 (VFLHIVADALGSVGVIISTIL). At 272–276 (MQRYG) the chain is on the lumenal side. A helical membrane pass occupies residues 277-297 (LMIADPICSMLIALLIFVSVI). At 298-390 (PLLKQSIGIL…LYVQIDMAAM (93 aa)) the chain is on the cytoplasmic side.

It belongs to the cation diffusion facilitator (CDF) transporter (TC 2.A.4) family. SLC30A subfamily. In terms of assembly, homooligomer.

Its subcellular location is the golgi apparatus membrane. It is found in the cytoplasmic vesicle. It localises to the golgi apparatus. The protein resides in the trans-Golgi network. The protein localises to the sarcoplasmic reticulum. Its subcellular location is the mitochondrion. The enzyme catalyses Zn(2+)(in) = Zn(2+)(out). In terms of biological role, zinc ion transporter mediating zinc entry from the cytosol into the lumen of organelles along the secretory pathway. By contributing to zinc ion homeostasis within the early secretory pathway, regulates the activation and folding of enzymes like alkaline phosphatases. The chain is Zinc transporter 7 (slc30a7) from Xenopus tropicalis (Western clawed frog).